Here is a 325-residue protein sequence, read N- to C-terminus: Ribosomal RNA small subunit methyltransferase H (325 aa).

Residues 42 to 44 (GGH), aspartate 62, phenylalanine 86, aspartate 105, and glutamine 112 contribute to the S-adenosyl-L-methionine site.

The protein belongs to the methyltransferase superfamily. RsmH family.

Its subcellular location is the cytoplasm. The enzyme catalyses cytidine(1402) in 16S rRNA + S-adenosyl-L-methionine = N(4)-methylcytidine(1402) in 16S rRNA + S-adenosyl-L-homocysteine + H(+). Functionally, specifically methylates the N4 position of cytidine in position 1402 (C1402) of 16S rRNA. The chain is Ribosomal RNA small subunit methyltransferase H from Cupriavidus metallidurans (strain ATCC 43123 / DSM 2839 / NBRC 102507 / CH34) (Ralstonia metallidurans).